We begin with the raw amino-acid sequence, 1240 residues long: DNA polymerase catalytic subunit (1240 aa).

The segment covering 1 to 22 (MFCAAGGPASPGGKPAARAASG) has biased composition (low complexity). Disordered stretches follow at residues 1 to 44 (MFCA…RRQN), 646 to 695 (GLDK…RETG), and 1103 to 1139 (AAAP…ASKP). Positions 669 to 688 (NGDEDKDDDEDGDEDGDERE) are enriched in acidic residues.

Belongs to the DNA polymerase type-B family. Forms a complex with the ssDNA-binding protein UL29, the DNA polymerase processivity factor, and the alkaline exonuclease. Interacts with the putative helicase-primase complex subunit UL8; this interaction may coordinate leading and lagging strand DNA synthesis at the replication fork.

The protein resides in the host nucleus. It carries out the reaction DNA(n) + a 2'-deoxyribonucleoside 5'-triphosphate = DNA(n+1) + diphosphate. The enzyme catalyses Endonucleolytic cleavage to 5'-phosphomonoester.. In terms of biological role, replicates viral genomic DNA. The replication complex is composed of six viral proteins: the DNA polymerase, processivity factor, primase, primase-associated factor, helicase, and ssDNA-binding protein. Additionally, the polymerase contains an intrinsic ribonuclease H (RNase H) activity that specifically degrades RNA/DNA heteroduplexes or duplex DNA substrates in the 5' to 3' direction. Therefore, it can catalyze the excision of the RNA primers that initiate the synthesis of Okazaki fragments at a replication fork during viral DNA replication. In Human herpesvirus 2 (strain HG52) (HHV-2), this protein is DNA polymerase catalytic subunit.